The primary structure comprises 455 residues: Mu-like prophage FluMu DNA circularization protein (455 aa).

Positions 368–387 (VILDNADAEQWTSYAALEQY) form a DNA-binding region, H-T-H motif.

It to phage Mu protein N.

This is Mu-like prophage FluMu DNA circularization protein from Haemophilus influenzae (strain ATCC 51907 / DSM 11121 / KW20 / Rd).